A 621-amino-acid chain; its full sequence is tRNA uridine 5-carboxymethylaminomethyl modification enzyme MnmG (621 aa).

An FAD-binding site is contributed by 11–16 (GGGHAG). 270–284 (GPRYCPSIEDKINRF) is a binding site for NAD(+).

Belongs to the MnmG family. Homodimer. Heterotetramer of two MnmE and two MnmG subunits. Requires FAD as cofactor.

The protein resides in the cytoplasm. Functionally, NAD-binding protein involved in the addition of a carboxymethylaminomethyl (cmnm) group at the wobble position (U34) of certain tRNAs, forming tRNA-cmnm(5)s(2)U34. The polypeptide is tRNA uridine 5-carboxymethylaminomethyl modification enzyme MnmG (Helicobacter pylori (strain Shi470)).